The sequence spans 511 residues: MNLLKSLAAVSSMTMFSRVLGFARDAIVARIFGAGMATDAFFVAFKLPNLLRRIFAEGAFSQAFVPILAEYKSKQGEDATRVFVSYVSGLLTLALAVVTVAGMLAAPWVIMVTAPGFADTADKFALTSQLLKITFPYILLISLASLVGAILNTWNRFSIPAFAPTLLNISMIGFALFAAPYFNPPVLALAWAVTVGGVLQLVYQLPHLKKIGMLVLPRINFHDAGAMRVVKQMGPAILGVSVSQISLIINTIFASFLASGSVSWMYYADRLMEFPSGVLGVALGTILLPSLSKSFASGNHDEYNRLMDWGLRLCFLLALPSAVALGILSGPLTVSLFQYGKFTAFDALMTQRALIAYSVGLIGLIVVKVLAPGFYSRQDIKTPVKIAIVTLILTQLMNLAFIGPLKHAGLSLSIGLAACLNASLLYWQLRKQKIFTPQPGWMAFLLRLVVAVLVMSGVLLGMLHIMPEWSLGTMPWRLLRLMAVVLAGIAAYFAALAVLGFKVKEFARRTV.

13 consecutive transmembrane segments (helical) span residues 31–51, 90–110, 130–150, 159–179, 182–202, 237–257, 271–291, 314–334, 354–374, 383–403, 407–427, 443–463, and 481–501; these read IFGA…PNLL, LLTL…PWVI, LLKI…VGAI, IPAF…LFAA, FNPP…LQLV, ILGV…ASFL, LMEF…LPSL, CFLL…PLTV, LIAY…APGF, PVKI…AFIG, HAGL…LLYW, AFLL…LGML, and LMAV…VLGF.

Belongs to the MurJ/MviN family.

The protein resides in the cell inner membrane. The protein operates within cell wall biogenesis; peptidoglycan biosynthesis. Functionally, involved in peptidoglycan biosynthesis. Transports lipid-linked peptidoglycan precursors from the inner to the outer leaflet of the cytoplasmic membrane. In Escherichia coli O157:H7, this protein is Probable lipid II flippase MurJ.